The chain runs to 158 residues: Ribosome maturation factor RimP (158 aa).

The protein belongs to the RimP family.

Its subcellular location is the cytoplasm. Functionally, required for maturation of 30S ribosomal subunits. The chain is Ribosome maturation factor RimP from Lactobacillus gasseri (strain ATCC 33323 / DSM 20243 / BCRC 14619 / CIP 102991 / JCM 1131 / KCTC 3163 / NCIMB 11718 / NCTC 13722 / AM63).